Here is a 371-residue protein sequence, read N- to C-terminus: tRNA-specific 2-thiouridylase MnmA (371 aa).

ATP contacts are provided by residues 12–19 (GMSGGVDS) and methionine 38. Positions 98 to 100 (NPD) are interaction with target base in tRNA. Cysteine 103 acts as the Nucleophile in catalysis. Cysteine 103 and cysteine 200 are disulfide-bonded. Glycine 128 contributes to the ATP binding site. Residues 150-152 (KDQ) are interaction with tRNA. The active-site Cysteine persulfide intermediate is cysteine 200. Residues 312–313 (RY) form an interaction with tRNA region.

It belongs to the MnmA/TRMU family. In terms of assembly, interacts with TusE.

The protein resides in the cytoplasm. It catalyses the reaction S-sulfanyl-L-cysteinyl-[protein] + uridine(34) in tRNA + AH2 + ATP = 2-thiouridine(34) in tRNA + L-cysteinyl-[protein] + A + AMP + diphosphate + H(+). Catalyzes the 2-thiolation of uridine at the wobble position (U34) of tRNA(Lys), tRNA(Glu) and tRNA(Gln), leading to the formation of s(2)U34, the first step of tRNA-mnm(5)s(2)U34 synthesis. Sulfur is provided by IscS, via a sulfur-relay system. Binds ATP and its substrate tRNAs. The protein is tRNA-specific 2-thiouridylase MnmA of Yersinia pestis bv. Antiqua (strain Antiqua).